A 500-amino-acid chain; its full sequence is Maturase K (500 aa).

Belongs to the intron maturase 2 family. MatK subfamily.

It is found in the plastid. The protein localises to the chloroplast. Functionally, usually encoded in the trnK tRNA gene intron. Probably assists in splicing its own and other chloroplast group II introns. This Adiantum capillus-veneris (Maidenhair fern) protein is Maturase K.